Consider the following 165-residue polypeptide: Transcription antitermination protein NusB (165 aa).

Residues 139-165 are disordered; that stretch reads EAVRSHRRNKRPAADKPVATDKPAAAE.

It belongs to the NusB family.

Its function is as follows. Involved in transcription antitermination. Required for transcription of ribosomal RNA (rRNA) genes. Binds specifically to the boxA antiterminator sequence of the ribosomal RNA (rrn) operons. In Laribacter hongkongensis (strain HLHK9), this protein is Transcription antitermination protein NusB.